We begin with the raw amino-acid sequence, 381 residues long: L-lactate dehydrogenase (381 aa).

The 380-residue stretch at 1-380 folds into the FMN hydroxy acid dehydrogenase domain; that stretch reads MIISASTDYR…NRDSLAVSER (380 aa). Residue Tyr-24 participates in substrate binding. Residues Ser-106 and Gln-127 each coordinate FMN. Tyr-129 serves as a coordination point for substrate. Thr-155 contacts FMN. Arg-164 is a substrate binding site. Residue Lys-251 coordinates FMN. The Proton acceptor role is filled by His-275. Residue Arg-278 coordinates substrate. 306–330 serves as a coordination point for FMN; that stretch reads DSGIRTGLDVVRMIALGADSVLLGR.

Belongs to the FMN-dependent alpha-hydroxy acid dehydrogenase family. It depends on FMN as a cofactor.

It is found in the cell inner membrane. The catalysed reaction is (S)-lactate + A = pyruvate + AH2. Its function is as follows. Catalyzes the conversion of L-lactate to pyruvate. Is coupled to the respiratory chain. The protein is L-lactate dehydrogenase of Yersinia pseudotuberculosis serotype O:1b (strain IP 31758).